The primary structure comprises 479 residues: uncharacterized protein (479 aa).

A disordered region spans residues leucine 180–threonine 203. Over residues serine 187 to isoleucine 202 the composition is skewed to polar residues. Residues proline 240–serine 462 enclose the PE-PPE domain.

This sequence belongs to the mycobacterial PPE family.

This is an uncharacterized protein from Mycobacterium tuberculosis (strain CDC 1551 / Oshkosh).